The sequence spans 156 residues: Snaclec A3 (156 aa).

Residues 1-23 form the signal peptide; sequence MGRSISVSFGLLVVFLSLSGTGA. 3 disulfide bridges follow: cysteine 27/cysteine 38, cysteine 55/cysteine 154, and cysteine 129/cysteine 146. Residues 34-155 enclose the C-type lectin domain; the sequence is HEGHCYKVFN…CGQPYRFTCE (122 aa).

It belongs to the snaclec family. Heterodimer; disulfide-linked. In terms of tissue distribution, expressed by the venom gland.

The protein localises to the secreted. Its function is as follows. Interferes with one step of hemostasis (modulation of platelet aggregation, or coagulation cascade, for example). This is Snaclec A3 from Macrovipera lebetinus (Levantine viper).